Reading from the N-terminus, the 504-residue chain is MTPVTTFPLVDAILAGRDRNLDGVILIAAQHLLQTTHAMLRSLFRVGLDPRNVAVIGKCYSTHPGVVDAMRADGIYVDDCSDAYAPHESFDTQYTRHVERFFAESWARLTAGRTARVVLLDDGGSLLAVAGAMLDASADVIGIEQTSAGYAKIVGCALGFPVINIARSSAKLLYESPIIAARVTQTAFERTAGIDSSAAILITGAGAIGTALADVLRPLHDRVDVYDTRSGCMTPIDLPNAIGGYDVIIGATGATSVPASMHELLRPGVLLMSASSSDREFDAVALRRRTTPNPDCHADLRVADGSVDATLLNSGFPVNFDGSPMCGDASMALTMALLAAAVLYASVAVADEMSSDHPHLGLIDQGDIVASFLNIDVPLQALSRLPLLSIDGYRRLQVRSGYTLFRQGERADHFFVIESGELEALVDGKVILRLGAGDHFGEACLLGGMRRIATVRACEPSVLWELDGKAFGDALHGDAAMREIAYGVARTRLMHAGASESLMV.

The next 3 membrane-spanning stretches (helical) occupy residues 146-166 (TSAG…INIA), 196-216 (SSAA…ADVL), and 330-350 (SMAL…VAVA). 372–492 (FLNIDVPLQA…EIAYGVARTR (121 aa)) serves as a coordination point for a nucleoside 3',5'-cyclic phosphate.

Its subcellular location is the cell membrane. This is an uncharacterized protein from Mycobacterium tuberculosis (strain CDC 1551 / Oshkosh).